A 33-amino-acid polypeptide reads, in one-letter code: Photosystem II reaction center protein Psb30 (33 aa).

Residues 5–25 (VIAQLTVLALIVISGPLVIAL) traverse the membrane as a helical segment.

It belongs to the Psb30/Ycf12 family. As to quaternary structure, PSII is composed of 1 copy each of membrane proteins PsbA, PsbB, PsbC, PsbD, PsbE, PsbF, PsbH, PsbI, PsbJ, PsbK, PsbL, PsbM, PsbT, PsbX, PsbY, PsbZ, Psb30/Ycf12, peripheral proteins of the oxygen-evolving complex and a large number of cofactors. It forms dimeric complexes.

Its subcellular location is the plastid. The protein localises to the chloroplast thylakoid membrane. Its function is as follows. A core subunit of photosystem II (PSII), probably helps stabilize the reaction center. The protein is Photosystem II reaction center protein Psb30 of Huperzia lucidula (Shining clubmoss).